The chain runs to 465 residues: Tubulin gamma chain (465 aa).

144–150 (AGGTGSG) is a GTP binding site.

This sequence belongs to the tubulin family.

Its subcellular location is the cytoplasm. It localises to the cytoskeleton. The protein localises to the microtubule organizing center. The protein resides in the spindle pole body. In terms of biological role, tubulin is the major constituent of microtubules. The gamma chain is found at microtubule organizing centers (MTOC) such as the spindle poles or the centrosome, suggesting that it is involved in the minus-end nucleation of microtubule assembly. The chain is Tubulin gamma chain (TUB4) from Candida glabrata (strain ATCC 2001 / BCRC 20586 / JCM 3761 / NBRC 0622 / NRRL Y-65 / CBS 138) (Yeast).